Consider the following 342-residue polypeptide: Immune-associated nucleotide-binding protein 9 (342 aa).

The region spanning 22-229 is the AIG1-type G domain; the sequence is NPKRTLVLVG…YSDELFHELQ (208 aa). Positions 31-38 are G1; it reads GRTGNGKS. GTP-binding positions include 31–39 and Ser52; that span reads GRTGNGKSA. The G2 stretch occupies residues 58–62; sequence GVTST. Positions 80 to 83 are G3; it reads DTPG. The tract at residues 149-152 is G4; that stretch reads TGGD. The tract at residues 188–190 is G5; the sequence is NNK. Asn189 contributes to the GTP binding site. The stretch at 276 to 342 forms a coiled coil; it reads ETKLRDTAKR…QKKLGKCINL (67 aa).

Belongs to the TRAFAC class TrmE-Era-EngA-EngB-Septin-like GTPase superfamily. AIG1/Toc34/Toc159-like paraseptin GTPase family. IAN subfamily. As to expression, mainly expressed in leaves.

The chain is Immune-associated nucleotide-binding protein 9 from Arabidopsis thaliana (Mouse-ear cress).